A 499-amino-acid chain; its full sequence is Probable mitochondrial-processing peptidase subunit alpha-2, chloroplastic/mitochondrial (499 aa).

Belongs to the peptidase M16 family. As to quaternary structure, heterodimer of alpha and beta subunits, forming the mitochondrial processing protease (MPP) in which subunit alpha is involved in substrate recognition and binding and subunit beta is the catalytic subunit. Component of the ubiquinol-cytochrome c oxidoreductase (cytochrome b-c1 complex, complex III, CIII), a multisubunit enzyme composed of 10 subunits. The complex is composed of 3 respiratory subunits cytochrome b (MT-CYB), cytochrome c1 (CYC1-1 or CYC1-2) and Rieske protein (UCR1-1 or UCR1-2), 2 core protein subunits MPPalpha1 (or MPPalpha2) and MPPB, and 5 low-molecular weight protein subunits QCR7-1 (or QCR7-2), UCRQ-1 (or UCRQ-2), QCR9, UCRY and probably QCR6-1 (or QCR6-2). The complex exists as an obligatory dimer and forms supercomplexes (SCs) in the inner mitochondrial membrane with NADH-ubiquinone oxidoreductase (complex I, CI), resulting in different assemblies (supercomplexes SCI(1)III(2) and SCI(2)III(4)). Interacts with TIM23-2.

The protein resides in the plastid. It is found in the chloroplast stroma. The protein localises to the mitochondrion matrix. It localises to the mitochondrion inner membrane. Substrate recognition and binding subunit of the essential mitochondrial processing protease (MPP), which cleaves the mitochondrial sequence off newly imported precursors proteins. Functionally, component of the ubiquinol-cytochrome c oxidoreductase, a multisubunit transmembrane complex that is part of the mitochondrial electron transport chain which drives oxidative phosphorylation. The respiratory chain contains 3 multisubunit complexes succinate dehydrogenase (complex II, CII), ubiquinol-cytochrome c oxidoreductase (cytochrome b-c1 complex, complex III, CIII) and cytochrome c oxidase (complex IV, CIV), that cooperate to transfer electrons derived from NADH and succinate to molecular oxygen, creating an electrochemical gradient over the inner membrane that drives transmembrane transport and the ATP synthase. The cytochrome b-c1 complex catalyzes electron transfer from ubiquinol to cytochrome c, linking this redox reaction to translocation of protons across the mitochondrial inner membrane, with protons being carried across the membrane as hydrogens on the quinol. In the process called Q cycle, 2 protons are consumed from the matrix, 4 protons are released into the intermembrane space and 2 electrons are passed to cytochrome c. In Arabidopsis thaliana (Mouse-ear cress), this protein is Probable mitochondrial-processing peptidase subunit alpha-2, chloroplastic/mitochondrial (MPPalpha2).